We begin with the raw amino-acid sequence, 169 residues long: UPF0251 protein MM_2090 (169 aa).

It belongs to the UPF0251 family.

The sequence is that of UPF0251 protein MM_2090 from Methanosarcina mazei (strain ATCC BAA-159 / DSM 3647 / Goe1 / Go1 / JCM 11833 / OCM 88) (Methanosarcina frisia).